The primary structure comprises 114 residues: PDZK1-interacting protein 1 (114 aa).

The Extracellular segment spans residues 1–28 (MSALSLVILGLLMAVPPASCQQGLGNLQ). A helical membrane pass occupies residues 29–51 (PWMQGLIAVAVFLVLVAIAFAIN). At 52–114 (HFWCQEEREP…EEGRVHSTPM (63 aa)) the chain is on the cytoplasmic side. The residue at position 85 (Ser-85) is a Phosphoserine. Residues 92–114 (SNEHENAYENTSEEEGRVHSTPM) form a disordered region. Basic and acidic residues predominate over residues 105-114 (EEGRVHSTPM).

The protein belongs to the PDZK1-interacting protein 1/SMIM24 family. Forms a heterodimer (via N-terminal transmembrane helix) with SLC5A2/SGLT2 (via TM13); this interaction enhances SLC5A2 transporter activity. Interacts with PDZK1.

The protein localises to the apical cell membrane. Functionally, auxiliary protein of electrogenic Na(+)-coupled sugar symporter SLC5A2/SGLT2 and SLC5A1/SGLT1. Essential for the transporter activity of SLC5A2/SGLT2 but not SLC5A1/SGLT1. The sequence is that of PDZK1-interacting protein 1 from Sus scrofa (Pig).